Consider the following 377-residue polypeptide: Cobalt-precorrin-5B C(1)-methyltransferase (377 aa).

Belongs to the CbiD family.

The enzyme catalyses Co-precorrin-5B + S-adenosyl-L-methionine = Co-precorrin-6A + S-adenosyl-L-homocysteine. It functions in the pathway cofactor biosynthesis; adenosylcobalamin biosynthesis; cob(II)yrinate a,c-diamide from sirohydrochlorin (anaerobic route): step 6/10. In terms of biological role, catalyzes the methylation of C-1 in cobalt-precorrin-5B to form cobalt-precorrin-6A. The polypeptide is Cobalt-precorrin-5B C(1)-methyltransferase (Alkaliphilus metalliredigens (strain QYMF)).